An 824-amino-acid polypeptide reads, in one-letter code: Neuronal PAS domain-containing protein 2 (824 aa).

Basic and acidic residues predominate over residues 1–10 (MDEDEKDRAK). Residues 1 to 21 (MDEDEKDRAKRASRNKSEKKR) form a disordered region. A sufficient for heterodimer formation with BMAL1, E-box binding and for the effect of NADPH region spans residues 1–61 (MDEDEKDRAK…VIGFLQKHNE (61 aa)). A bHLH domain is found at 9–59 (AKRASRNKSEKKRRDQFNVLIKELSSMLPGNTRKMDKTTVLEKVIGFLQKH). Residues 82–152 (NEEFTQLMLE…KILSSHMLVT (71 aa)) enclose the PAS 1 domain. Residues His119 and His171 each coordinate heme b. Residues 237–307 (FLKEMCIVDE…RCHQHLMQFG (71 aa)) enclose the PAS 2 domain. The 44-residue stretch at 311 to 354 (SCCYRFLTKGQQWIWLQTHYYITYHQWNSKPEFIVCTHSVVSYA) folds into the PAC domain. Disordered stretches follow at residues 367 to 437 (EDPP…MAEA), 556 to 667 (SSTQ…PDFS), 681 to 704 (QPMM…RQVK), and 739 to 824 (PSFP…QPPR). Positions 378-390 (ALKDKGSSLEPRQ) are enriched in basic and acidic residues. A compositionally biased stretch (polar residues) spans 421–431 (TAMSEPTSTPT). Over residues 559-576 (QRPEAQQQLQQRSAAVTQ) the composition is skewed to low complexity. Residues 587-610 (GQISSAQVTSQHLLRESSVISTQG) are compositionally biased toward polar residues. Residues 614–636 (MRSSQLMQSSGRSGSSLVSPFSS) show a composition bias toward low complexity. Composition is skewed to polar residues over residues 645-664 (LNLT…QPSP) and 694-704 (SEVSRTGRQVK). A compositionally biased stretch (low complexity) spans 739 to 760 (PSFPASQPSPLQPAQARQQPPQ). Positions 766–789 (QAPTSLHSEQQDSLLLSTYSQQPG) are enriched in polar residues. Residues 794 to 805 (PQPPPAQPQPLR) are compositionally biased toward pro residues. The segment covering 809–824 (RVSSLSESSGLQQPPR) has biased composition (low complexity).

In terms of assembly, component of the circadian clock oscillator which includes the CRY proteins, CLOCK or NPAS2, BMAL1 or BMAL2, CSNK1D and/or CSNK1E, TIMELESS and the PER proteins. Efficient DNA binding requires dimerization with another bHLH protein. Forms a heterodimer with BMAL1 and this heterodimerization is required for E-box-dependent transactivation. Interacts with NCOA3, KAT2B, CREBBP and EP300. It depends on heme as a cofactor.

The protein resides in the nucleus. Its activity is regulated as follows. Carbon monoxide (CO) and the redox state of the cell can modulate the transcriptional activity of the NPAS2-BMAL1 heterodimer. NADH and NADPH enhance the DNA-binding activity of the heterodimer whereas CO binds the heme group in NPAS2 and inhibits the DNA-binding activity of the heterodimer. Its function is as follows. Transcriptional activator which forms a core component of the circadian clock. The circadian clock, an internal time-keeping system, regulates various physiological processes through the generation of approximately 24 hour circadian rhythms in gene expression, which are translated into rhythms in metabolism and behavior. It is derived from the Latin roots 'circa' (about) and 'diem' (day) and acts as an important regulator of a wide array of physiological functions including metabolism, sleep, body temperature, blood pressure, endocrine, immune, cardiovascular, and renal function. Consists of two major components: the central clock, residing in the suprachiasmatic nucleus (SCN) of the brain, and the peripheral clocks that are present in nearly every tissue and organ system. Both the central and peripheral clocks can be reset by environmental cues, also known as Zeitgebers (German for 'timegivers'). The predominant Zeitgeber for the central clock is light, which is sensed by retina and signals directly to the SCN. The central clock entrains the peripheral clocks through neuronal and hormonal signals, body temperature and feeding-related cues, aligning all clocks with the external light/dark cycle. Circadian rhythms allow an organism to achieve temporal homeostasis with its environment at the molecular level by regulating gene expression to create a peak of protein expression once every 24 hours to control when a particular physiological process is most active with respect to the solar day. Transcription and translation of core clock components (CLOCK, NPAS2, BMAL1, BMAL2, PER1, PER2, PER3, CRY1 and CRY2) plays a critical role in rhythm generation, whereas delays imposed by post-translational modifications (PTMs) are important for determining the period (tau) of the rhythms (tau refers to the period of a rhythm and is the length, in time, of one complete cycle). A diurnal rhythm is synchronized with the day/night cycle, while the ultradian and infradian rhythms have a period shorter and longer than 24 hours, respectively. Disruptions in the circadian rhythms contribute to the pathology of cardiovascular diseases, cancer, metabolic syndromes and aging. A transcription/translation feedback loop (TTFL) forms the core of the molecular circadian clock mechanism. Transcription factors, CLOCK or NPAS2 and BMAL1 or BMAL2, form the positive limb of the feedback loop, act in the form of a heterodimer and activate the transcription of core clock genes and clock-controlled genes (involved in key metabolic processes), harboring E-box elements (5'-CACGTG-3') within their promoters. The core clock genes: PER1/2/3 and CRY1/2 which are transcriptional repressors form the negative limb of the feedback loop and interact with the CLOCK|NPAS2-BMAL1|BMAL2 heterodimer inhibiting its activity and thereby negatively regulating their own expression. This heterodimer also activates nuclear receptors NR1D1/2 and RORA/B/G, which form a second feedback loop and which activate and repress BMAL1 transcription, respectively. The NPAS2-BMAL1 heterodimer positively regulates the expression of MAOA, F7 and LDHA and modulates the circadian rhythm of daytime contrast sensitivity by regulating the rhythmic expression of adenylate cyclase type 1 (ADCY1) in the retina. NPAS2 plays an important role in sleep homeostasis and in maintaining circadian behaviors in normal light/dark and feeding conditions and in the effective synchronization of feeding behavior with scheduled food availability. Regulates the gene transcription of key metabolic pathways in the liver and is involved in DNA damage response by regulating several cell cycle and DNA repair genes. Controls the circadian rhythm of NR0B2 expression by binding rhythmically to its promoter. Mediates the diurnal variation in the expression of GABARA1 receptor in the brain and contributes to the regulation of anxiety-like behaviors and GABAergic neurotransmission in the ventral striatum. This chain is Neuronal PAS domain-containing protein 2 (NPAS2), found in Homo sapiens (Human).